A 399-amino-acid polypeptide reads, in one-letter code: Homeobox protein ceh-39 (399 aa).

2 disordered regions span residues 32 to 91 and 158 to 187; these read PEPA…GDTE and AKKS…RPAS. A compositionally biased stretch (low complexity) spans 60 to 79; it reads SSMCGSSSSSSSSSYSSGSS. A DNA-binding region (CUT) is located at residues 205-291; that stretch reads NRQIGDDEEL…VRRALCFMKK (87 aa). The homeobox DNA-binding region spans 315 to 374; sequence SDERIRRFTFTQTQLDSLHTVFQQQDRPNREMQQALSATLKLNRSTVGNFFMNARRRLPK.

It belongs to the CUT homeobox family. As to expression, expressed in hermaphrodite gonads.

The protein localises to the nucleus. It localises to the chromosome. Its function is as follows. Transcriptional regulator which is involved in the sex determination and X chromosome dosage compensation pathways. Directly binds to 5'-ATTGAT-3' sites in the promoter of sex-determining factor xol-1 to negatively regulate its expression and promote hermaphrodite development. Associates with condensed DNA during mitosis. The chain is Homeobox protein ceh-39 from Caenorhabditis elegans.